The following is a 271-amino-acid chain: Elongation factor Ts (271 aa).

The segment at 76-79 (TDFV) is involved in Mg(2+) ion dislocation from EF-Tu.

It belongs to the EF-Ts family.

It is found in the cytoplasm. Its function is as follows. Associates with the EF-Tu.GDP complex and induces the exchange of GDP to GTP. It remains bound to the aminoacyl-tRNA.EF-Tu.GTP complex up to the GTP hydrolysis stage on the ribosome. This is Elongation factor Ts from Saccharopolyspora erythraea (strain ATCC 11635 / DSM 40517 / JCM 4748 / NBRC 13426 / NCIMB 8594 / NRRL 2338).